The sequence spans 145 residues: Putative pre-16S rRNA nuclease (145 aa).

Belongs to the YqgF nuclease family.

It is found in the cytoplasm. Its function is as follows. Could be a nuclease involved in processing of the 5'-end of pre-16S rRNA. This chain is Putative pre-16S rRNA nuclease, found in Limosilactobacillus fermentum (strain NBRC 3956 / LMG 18251) (Lactobacillus fermentum).